Consider the following 315-residue polypeptide: Homeobox-leucine zipper protein HAT3 (315 aa).

Positions 140 to 163 (SCSLGGGSDDEDGSGNGDDSSRKK) are disordered. Residues 159–218 (SSRKKLRLSKEQALVLEETFKEHSTLNPKQKMALAKQLNLRTRQVEVWFQNRRARTKLKQ) constitute a DNA-binding region (homeobox). The segment at 226 to 247 (LKRCCENLTDENRRLQKEVSEL) is leucine-zipper. Low complexity predominate over residues 280–305 (SSSSVAPPVMNSSSPMGPMSPWAAMP). A disordered region spans residues 280–315 (SSSSVAPPVMNSSSPMGPMSPWAAMPLRQRPAAGSH).

This sequence belongs to the HD-ZIP homeobox family. Class II subfamily.

The protein localises to the nucleus. Probable transcription factor. This chain is Homeobox-leucine zipper protein HAT3 (HAT3), found in Arabidopsis thaliana (Mouse-ear cress).